A 148-amino-acid polypeptide reads, in one-letter code: Glycine cleavage system H protein 5 (148 aa).

The Lipoyl-binding domain occupies Val-33 to Lys-115. N6-lipoyllysine is present on Lys-74.

It belongs to the GcvH family. In terms of assembly, the glycine cleavage system is composed of four proteins: P, T, L and H. Requires (R)-lipoate as cofactor.

Its function is as follows. The glycine cleavage system catalyzes the degradation of glycine. The H protein shuttles the methylamine group of glycine from the P protein to the T protein. This is Glycine cleavage system H protein 5 from Aquifex aeolicus (strain VF5).